The primary structure comprises 177 residues: Inorganic pyrophosphatase (177 aa).

3 residues coordinate substrate: lysine 34, arginine 48, and tyrosine 60. Aspartate 70, aspartate 75, and aspartate 107 together coordinate Mg(2+). Tyrosine 144 is a substrate binding site.

The protein belongs to the PPase family. As to quaternary structure, homohexamer. It depends on Mg(2+) as a cofactor.

It localises to the cytoplasm. It catalyses the reaction diphosphate + H2O = 2 phosphate + H(+). In terms of biological role, catalyzes the hydrolysis of inorganic pyrophosphate (PPi) forming two phosphate ions. This is Inorganic pyrophosphatase from Picrophilus torridus (strain ATCC 700027 / DSM 9790 / JCM 10055 / NBRC 100828 / KAW 2/3).